An 875-amino-acid polypeptide reads, in one-letter code: Metal transporter CNNM2 (875 aa).

The Extracellular segment spans residues 1–250 (MIGCGACEPE…TKMIVGEEKK (250 aa)). N-linked (GlcNAc...) asparagine glycosylation occurs at Asn112. Positions 121–149 (TEHERRRHTPSERGLGGPAPPEPDSGPQR) are disordered. The chain crosses the membrane as a helical span at residues 251-271 (FLLPFWLQVIFISLLLCLSGM). The region spanning 251 to 431 (FLLPFWLQVI…DPYNDLVKEE (181 aa)) is the CNNM transmembrane domain. Residues 272-313 (FSGLNLGLMALDPMELRIVQNCGTEKEKNYAKRIEPVRRQGN) are Cytoplasmic-facing. The helical intramembrane region spans 314–334 (YLLCSLLLGNVLVNTTLTILL). Over 335–338 (DDIA) the chain is Cytoplasmic. The chain crosses the membrane as a helical span at residues 339–359 (GSGLVAVVVSTIGIVIFGEIV). The Extracellular segment spans residues 360–368 (PQAICSRHG). Residues 369 to 389 (LAVGANTIFLTKFFMMMTFPA) form a helical membrane-spanning segment. Over 390-875 (SYPVSKLLDC…NHSLHSEGAI (486 aa)) the chain is Cytoplasmic. CBS domains are found at residues 450–511 (MTPL…CTPL) and 518–584 (YNHP…ILDE). The interval 741–763 (AGSPGENKSPPRPCGLNHSDSLS) is disordered. Ser761 is subject to Phosphoserine.

The protein belongs to the ACDP family. Isoform 1 and isoform 2 may interact with each other. In terms of processing, the N-terminus is cleaved within the endoplasmic reticulum. The signal peptidase complex seems to be involved in the processing, but the exact cleavage site has not been identified. In terms of tissue distribution, widely expressed, with highest levels in kidney, lung, spleen and testis. In the kidney, predominantly expressed in the distal convoluted tubule and, at lower levels, in the connecting tubule (at protein level).

The protein localises to the cell membrane. In terms of biological role, divalent metal cation transporter. Mediates transport of divalent metal cations in an order of Mg(2+) &gt; Co(2+) &gt; Mn(2+) &gt; Sr(2+) &gt; Ba(2+) &gt; Cu(2+) &gt; Fe(2+). In Mus musculus (Mouse), this protein is Metal transporter CNNM2 (Cnnm2).